Consider the following 445-residue polypeptide: Na(+)-translocating NADH-quinone reductase subunit A (445 aa).

The protein belongs to the NqrA family. In terms of assembly, composed of six subunits; NqrA, NqrB, NqrC, NqrD, NqrE and NqrF.

The catalysed reaction is a ubiquinone + n Na(+)(in) + NADH + H(+) = a ubiquinol + n Na(+)(out) + NAD(+). Its function is as follows. NQR complex catalyzes the reduction of ubiquinone-1 to ubiquinol by two successive reactions, coupled with the transport of Na(+) ions from the cytoplasm to the periplasm. NqrA to NqrE are probably involved in the second step, the conversion of ubisemiquinone to ubiquinol. The chain is Na(+)-translocating NADH-quinone reductase subunit A from Marinomonas sp. (strain MWYL1).